Here is a 141-residue protein sequence, read N- to C-terminus: MLLGTFNLTLDNKNRISLPAKLRSFFDSSIVINRGFENCLEIRKPADFESYFQTFNNFPNTQKDTRTLKRLIFANANLVELDSANRILIPNNLISDAKLDKEIVLIGQFDHLEVWDKVQYEQYLASSESLETVAERMKDAK.

2 consecutive SpoVT-AbrB domains span residues 5–47 (TFNL…KPAD) and 76–119 (ANLV…DKVQ).

This sequence belongs to the MraZ family. In terms of assembly, forms oligomers.

It localises to the cytoplasm. Its subcellular location is the nucleoid. The sequence is that of Transcriptional regulator MraZ from Mycoplasma genitalium (strain ATCC 33530 / DSM 19775 / NCTC 10195 / G37) (Mycoplasmoides genitalium).